Consider the following 534-residue polypeptide: Membrane-bound lytic murein transglycosylase F (534 aa).

Positions 1–24 are cleaved as a signal peptide; it reads MQISQFNRLKRSALLFASVLLLSA. The segment at 25 to 285 is non-LT domain; sequence CQIESEPKSE…TLEEKYIGHI (261 aa). An LT domain region spans residues 287-534; sequence AFDYVDTRAF…AEQTPVPKAE (248 aa). Glu330 is a catalytic residue. The disordered stretch occupies residues 507–534; that stretch reads VSGAVEVTPPPEENAPQEAEQTPVPKAE. Over residues 520–534 the composition is skewed to low complexity; it reads NAPQEAEQTPVPKAE.

In the N-terminal section; belongs to the bacterial solute-binding protein 3 family. This sequence in the C-terminal section; belongs to the transglycosylase Slt family.

It localises to the cell outer membrane. The enzyme catalyses Exolytic cleavage of the (1-&gt;4)-beta-glycosidic linkage between N-acetylmuramic acid (MurNAc) and N-acetylglucosamine (GlcNAc) residues in peptidoglycan, from either the reducing or the non-reducing ends of the peptidoglycan chains, with concomitant formation of a 1,6-anhydrobond in the MurNAc residue.. In terms of biological role, murein-degrading enzyme that degrades murein glycan strands and insoluble, high-molecular weight murein sacculi, with the concomitant formation of a 1,6-anhydromuramoyl product. Lytic transglycosylases (LTs) play an integral role in the metabolism of the peptidoglycan (PG) sacculus. Their lytic action creates space within the PG sacculus to allow for its expansion as well as for the insertion of various structures such as secretion systems and flagella. The sequence is that of Membrane-bound lytic murein transglycosylase F from Vibrio campbellii (strain ATCC BAA-1116).